The primary structure comprises 497 residues: Glycerol kinase 2 (497 aa).

T13 is a binding site for ADP. ATP-binding residues include T13, T14, and S15. T13 lines the sn-glycerol 3-phosphate pocket. R17 contacts ADP. Positions 83, 84, 134, and 241 each coordinate sn-glycerol 3-phosphate. Glycerol is bound by residues R83, E84, Y134, D241, and Q242. ADP-binding residues include T263 and G305. Residues T263, G305, Q309, and G406 each coordinate ATP. ADP contacts are provided by G406 and N410.

Belongs to the FGGY kinase family.

The catalysed reaction is glycerol + ATP = sn-glycerol 3-phosphate + ADP + H(+). The protein operates within polyol metabolism; glycerol degradation via glycerol kinase pathway; sn-glycerol 3-phosphate from glycerol: step 1/1. Its function is as follows. Key enzyme in the regulation of glycerol uptake and metabolism. Catalyzes the phosphorylation of glycerol to yield sn-glycerol 3-phosphate. The protein is Glycerol kinase 2 of Sulfolobus acidocaldarius (strain ATCC 33909 / DSM 639 / JCM 8929 / NBRC 15157 / NCIMB 11770).